A 64-amino-acid polypeptide reads, in one-letter code: Translation machinery-associated protein 7 homolog (64 aa).

Residues 1 to 64 (MTGREGGKKK…TGGIKKSGKK (64 aa)) form a disordered region. Positions 21-50 (EMDEEDMAFKQKQKEQQKAMEAAKQKAAKG) form a coiled coil. The segment covering 27 to 44 (MAFKQKQKEQQKAMEAAK) has biased composition (basic and acidic residues).

This sequence belongs to the TMA7 family.

In Aedes aegypti (Yellowfever mosquito), this protein is Translation machinery-associated protein 7 homolog.